The following is a 180-amino-acid chain: NAD(P)H-quinone oxidoreductase subunit I, chloroplastic (180 aa).

4Fe-4S ferredoxin-type domains follow at residues 55–84 (GRIH…VNWR) and 95–124 (LNYS…MTEE). Positions 64, 67, 70, 74, 104, 107, 110, and 114 each coordinate [4Fe-4S] cluster.

The protein belongs to the complex I 23 kDa subunit family. In terms of assembly, NDH is composed of at least 16 different subunits, 5 of which are encoded in the nucleus. The cofactor is [4Fe-4S] cluster.

Its subcellular location is the plastid. The protein localises to the chloroplast thylakoid membrane. It catalyses the reaction a plastoquinone + NADH + (n+1) H(+)(in) = a plastoquinol + NAD(+) + n H(+)(out). The enzyme catalyses a plastoquinone + NADPH + (n+1) H(+)(in) = a plastoquinol + NADP(+) + n H(+)(out). NDH shuttles electrons from NAD(P)H:plastoquinone, via FMN and iron-sulfur (Fe-S) centers, to quinones in the photosynthetic chain and possibly in a chloroplast respiratory chain. The immediate electron acceptor for the enzyme in this species is believed to be plastoquinone. Couples the redox reaction to proton translocation, and thus conserves the redox energy in a proton gradient. In Platanus occidentalis (Sycamore), this protein is NAD(P)H-quinone oxidoreductase subunit I, chloroplastic.